A 293-amino-acid polypeptide reads, in one-letter code: Formamidopyrimidine-DNA glycosylase (293 aa).

Catalysis depends on P2, which acts as the Schiff-base intermediate with DNA. E3 acts as the Proton donor in catalysis. The active-site Proton donor; for beta-elimination activity is K60. Positions 110, 129, and 174 each coordinate DNA. An FPG-type zinc finger spans residues 259 to 293 (NVYRRTGKKCHACKNLIERQKISGRSTHWCRKCQK). The active-site Proton donor; for delta-elimination activity is R283.

The protein belongs to the FPG family. As to quaternary structure, monomer. Zn(2+) serves as cofactor.

It carries out the reaction Hydrolysis of DNA containing ring-opened 7-methylguanine residues, releasing 2,6-diamino-4-hydroxy-5-(N-methyl)formamidopyrimidine.. The enzyme catalyses 2'-deoxyribonucleotide-(2'-deoxyribose 5'-phosphate)-2'-deoxyribonucleotide-DNA = a 3'-end 2'-deoxyribonucleotide-(2,3-dehydro-2,3-deoxyribose 5'-phosphate)-DNA + a 5'-end 5'-phospho-2'-deoxyribonucleoside-DNA + H(+). Its function is as follows. Involved in base excision repair of DNA damaged by oxidation or by mutagenic agents. Acts as a DNA glycosylase that recognizes and removes damaged bases. Has a preference for oxidized purines, such as 7,8-dihydro-8-oxoguanine (8-oxoG). Has AP (apurinic/apyrimidinic) lyase activity and introduces nicks in the DNA strand. Cleaves the DNA backbone by beta-delta elimination to generate a single-strand break at the site of the removed base with both 3'- and 5'-phosphates. The sequence is that of Formamidopyrimidine-DNA glycosylase from Prochlorococcus marinus (strain MIT 9515).